We begin with the raw amino-acid sequence, 427 residues long: Peptidase B (427 aa).

Mn(2+) contacts are provided by lysine 195 and aspartate 200. Lysine 207 is a catalytic residue. 3 residues coordinate Mn(2+): aspartate 218, aspartate 277, and glutamate 279. Arginine 281 is a catalytic residue.

It belongs to the peptidase M17 family. As to quaternary structure, homohexamer. It depends on Mn(2+) as a cofactor.

The protein localises to the cytoplasm. It carries out the reaction Release of an N-terminal amino acid, Xaa, from a peptide or arylamide. Xaa is preferably Glu or Asp but may be other amino acids, including Leu, Met, His, Cys and Gln.. Functionally, probably plays an important role in intracellular peptide degradation. This chain is Peptidase B, found in Shigella flexneri.